Here is a 113-residue protein sequence, read N- to C-terminus: Hydrogenase maturation factor HypA (113 aa).

Histidine 2 serves as a coordination point for Ni(2+). Residues cysteine 73, cysteine 76, cysteine 89, and cysteine 92 each contribute to the Zn(2+) site.

This sequence belongs to the HypA/HybF family.

Its function is as follows. Involved in the maturation of [NiFe] hydrogenases. Required for nickel insertion into the metal center of the hydrogenase. This chain is Hydrogenase maturation factor HypA, found in Legionella pneumophila subsp. pneumophila (strain Philadelphia 1 / ATCC 33152 / DSM 7513).